The sequence spans 262 residues: Hemin import ATP-binding protein HmuV (262 aa).

Residues I2–R241 form the ABC transporter domain. G34–T41 serves as a coordination point for ATP.

It belongs to the ABC transporter superfamily. Heme (hemin) importer (TC 3.A.1.14.5) family. In terms of assembly, the complex is composed of two ATP-binding proteins (HmuV), two transmembrane proteins (HmuU) and a solute-binding protein (HmuT).

It localises to the cell inner membrane. In terms of biological role, part of the ABC transporter complex HmuTUV involved in hemin import. Responsible for energy coupling to the transport system. This Rhizobium meliloti (strain 1021) (Ensifer meliloti) protein is Hemin import ATP-binding protein HmuV.